The sequence spans 230 residues: Endonuclease NucS (230 aa).

Belongs to the NucS endonuclease family.

It is found in the cytoplasm. In terms of biological role, cleaves both 3' and 5' ssDNA extremities of branched DNA structures. This chain is Endonuclease NucS, found in Corynebacterium glutamicum (strain ATCC 13032 / DSM 20300 / JCM 1318 / BCRC 11384 / CCUG 27702 / LMG 3730 / NBRC 12168 / NCIMB 10025 / NRRL B-2784 / 534).